The following is a 222-amino-acid chain: MPSLSKEAALVHDALVARGLETPLRPPMDELDNETRKSLIAGHMTEIMQLLNLDLSDDSLMETPHRIAKMYVDEIFAGLDYANFPKITLIENKMKVDEMVTVRDITLTSTCEHHFVTIDGKATVAYIPKDSVIGLSKINRIVQFFAQRPQVQERLTQQILTALQTLLGTNNVAVSIDAVHYCVKARGIRDATSATTTTSLGGLFKSSQNTRQEFLRAVRHHP.

Zn(2+)-binding residues include Cys111, His114, and Cys182.

Belongs to the GTP cyclohydrolase I family. As to quaternary structure, toroid-shaped homodecamer, composed of two pentamers of five dimers.

It carries out the reaction GTP + H2O = 7,8-dihydroneopterin 3'-triphosphate + formate + H(+). Its pathway is cofactor biosynthesis; 7,8-dihydroneopterin triphosphate biosynthesis; 7,8-dihydroneopterin triphosphate from GTP: step 1/1. With respect to regulation, allosteric enzyme. Activity is modulated by K(+), divalent cations, UTP, and tetrahydrobiopterin. Tetrahydrobiopterin is an inhibitor of this enzyme. The chain is GTP cyclohydrolase 1 from Salmonella typhi.